A 399-amino-acid chain; its full sequence is Dual-specificity RNA methyltransferase RlmN (399 aa).

The active-site Proton acceptor is E122. The Radical SAM core domain occupies 128–371; that stretch reads ETDRGTLCVS…VRTPRGRDIL (244 aa). The cysteines at positions 135 and 374 are disulfide-linked. [4Fe-4S] cluster-binding residues include C142, C146, and C149. S-adenosyl-L-methionine is bound by residues 200–201, S232, 254–256, and N331; these read GE and SLH. C374 serves as the catalytic S-methylcysteine intermediate.

It belongs to the radical SAM superfamily. RlmN family. [4Fe-4S] cluster serves as cofactor.

The protein resides in the cytoplasm. It catalyses the reaction adenosine(2503) in 23S rRNA + 2 reduced [2Fe-2S]-[ferredoxin] + 2 S-adenosyl-L-methionine = 2-methyladenosine(2503) in 23S rRNA + 5'-deoxyadenosine + L-methionine + 2 oxidized [2Fe-2S]-[ferredoxin] + S-adenosyl-L-homocysteine. The enzyme catalyses adenosine(37) in tRNA + 2 reduced [2Fe-2S]-[ferredoxin] + 2 S-adenosyl-L-methionine = 2-methyladenosine(37) in tRNA + 5'-deoxyadenosine + L-methionine + 2 oxidized [2Fe-2S]-[ferredoxin] + S-adenosyl-L-homocysteine. Its function is as follows. Specifically methylates position 2 of adenine 2503 in 23S rRNA and position 2 of adenine 37 in tRNAs. m2A2503 modification seems to play a crucial role in the proofreading step occurring at the peptidyl transferase center and thus would serve to optimize ribosomal fidelity. This is Dual-specificity RNA methyltransferase RlmN from Rhodopseudomonas palustris (strain TIE-1).